The primary structure comprises 323 residues: Small ribosomal subunit protein uS2 (323 aa).

The interval 295–323 is disordered; that stretch reads VVNRDRAGFNKKQPKAEEAAKPAEKKAEK.

This sequence belongs to the universal ribosomal protein uS2 family.

In Mycoplasmoides gallisepticum (strain R(low / passage 15 / clone 2)) (Mycoplasma gallisepticum), this protein is Small ribosomal subunit protein uS2.